The following is a 417-amino-acid chain: Serine hydroxymethyltransferase (417 aa).

(6S)-5,6,7,8-tetrahydrofolate-binding positions include L121 and 125-127; that span reads GHL. K229 bears the N6-(pyridoxal phosphate)lysine mark. Position 355 to 357 (355 to 357) interacts with (6S)-5,6,7,8-tetrahydrofolate; that stretch reads SPF.

This sequence belongs to the SHMT family. Homodimer. Pyridoxal 5'-phosphate serves as cofactor.

It is found in the cytoplasm. The enzyme catalyses (6R)-5,10-methylene-5,6,7,8-tetrahydrofolate + glycine + H2O = (6S)-5,6,7,8-tetrahydrofolate + L-serine. The protein operates within one-carbon metabolism; tetrahydrofolate interconversion. It functions in the pathway amino-acid biosynthesis; glycine biosynthesis; glycine from L-serine: step 1/1. Its function is as follows. Catalyzes the reversible interconversion of serine and glycine with tetrahydrofolate (THF) serving as the one-carbon carrier. This reaction serves as the major source of one-carbon groups required for the biosynthesis of purines, thymidylate, methionine, and other important biomolecules. Also exhibits THF-independent aldolase activity toward beta-hydroxyamino acids, producing glycine and aldehydes, via a retro-aldol mechanism. The sequence is that of Serine hydroxymethyltransferase from Xylella fastidiosa (strain M23).